We begin with the raw amino-acid sequence, 992 residues long: GYF domain-containing protein mpd2 (992 aa).

Disordered stretches follow at residues 24–105, 172–245, and 289–316; these read ANNS…SANP, GTAS…NVAS, and FSQS…MSIR. Composition is skewed to polar residues over residues 25-58 and 75-104; these read NNSS…SSHI and KSGN…SSAN. Ser175 is modified (phosphoserine). Residues 193 to 205 are compositionally biased toward low complexity; it reads SPSSFSQSRSAVS. Composition is skewed to polar residues over residues 214-237 and 301-315; these read TLQQ…SNQP and FPTN…SMSI. The residue at position 318 (Thr318) is a Phosphothreonine. A Phosphoserine modification is found at Ser320. The tract at residues 336–359 is disordered; it reads KENASQPVAPSASQREHSAVNSPA. The span at 337-348 shows a compositional bias: polar residues; it reads ENASQPVAPSAS. The 49-residue stretch at 386–434 folds into the GYF domain; sequence LLHWLYKDPQNNVQGPFTGVDMHQWYRAGYFPLGLPIKRLEEEEYYSLA. 8 disordered regions span residues 467-486, 496-563, 576-637, 651-682, 697-729, 760-794, 818-859, and 940-992; these read DLPL…GGNK, EVSN…NESL, SEET…HLPS, SEAL…WAKV, EKQN…LASG, AELA…PSSN, VGPG…SSKL, and TGKD…KKRV. Polar residues-rich tracts occupy residues 474-483 and 507-532; these read LPESSEQNRG and ANSL…NEDS. Residue Ser509 is modified to Phosphoserine. Composition is skewed to basic and acidic residues over residues 549–561 and 577–595; these read MYEK…HHNE and EETK…ESKR. The span at 596–606 shows a compositional bias: polar residues; that stretch reads LSTGVQKQSPA. Phosphoserine occurs at positions 604 and 637. Composition is skewed to polar residues over residues 658–676 and 707–721; these read EKSN…SKTG and VASN…NAKA. Phosphoserine occurs at positions 775, 829, 838, and 840. Composition is skewed to polar residues over residues 825 to 859 and 943 to 966; these read VNQQ…SSKL and DGQQ…SQVV.

It belongs to the SMY2/mpd2 family.

The protein localises to the cytoplasm. Functionally, has a role in mRNA export from the nucleus. This chain is GYF domain-containing protein mpd2 (mpd2), found in Schizosaccharomyces pombe (strain 972 / ATCC 24843) (Fission yeast).